The chain runs to 174 residues: Shikimate kinase 2 (174 aa).

12–17 is an ATP binding site; the sequence is GCGKTT. The Mg(2+) site is built by T16 and D32. Substrate-binding residues include D34, R58, and G79. The tract at residues 112 to 126 is LID domain; the sequence is QAAPEEDLRPTLTGK. R120 serves as a coordination point for ATP. R139 is a binding site for substrate.

Belongs to the shikimate kinase family. AroL subfamily. As to quaternary structure, monomer. Requires Mg(2+) as cofactor.

It is found in the cytoplasm. It carries out the reaction shikimate + ATP = 3-phosphoshikimate + ADP + H(+). It functions in the pathway metabolic intermediate biosynthesis; chorismate biosynthesis; chorismate from D-erythrose 4-phosphate and phosphoenolpyruvate: step 5/7. Functionally, catalyzes the specific phosphorylation of the 3-hydroxyl group of shikimic acid using ATP as a cosubstrate. In Shigella dysenteriae serotype 1 (strain Sd197), this protein is Shikimate kinase 2.